The primary structure comprises 217 residues: Probable transaldolase (217 aa).

Lys-85 functions as the Schiff-base intermediate with substrate in the catalytic mechanism.

This sequence belongs to the transaldolase family. Type 3B subfamily.

It localises to the cytoplasm. The enzyme catalyses D-sedoheptulose 7-phosphate + D-glyceraldehyde 3-phosphate = D-erythrose 4-phosphate + beta-D-fructose 6-phosphate. Its pathway is carbohydrate degradation; pentose phosphate pathway; D-glyceraldehyde 3-phosphate and beta-D-fructose 6-phosphate from D-ribose 5-phosphate and D-xylulose 5-phosphate (non-oxidative stage): step 2/3. Transaldolase is important for the balance of metabolites in the pentose-phosphate pathway. The chain is Probable transaldolase from Lachnoclostridium phytofermentans (strain ATCC 700394 / DSM 18823 / ISDg) (Clostridium phytofermentans).